The primary structure comprises 282 residues: Acetyl-coenzyme A carboxylase carboxyl transferase subunit beta (282 aa).

Residues 29–282 form the CoA carboxyltransferase N-terminal domain; that stretch reads LMQRCPNCGL…LLKYGGMQDD (254 aa). 4 residues coordinate Zn(2+): C33, C36, C51, and C54. Residues 33–54 form a C4-type zinc finger; it reads CPNCGLEFFARRLDKYKTCPDC.

It belongs to the AccD/PCCB family. In terms of assembly, acetyl-CoA carboxylase is a heterohexamer composed of biotin carboxyl carrier protein (AccB), biotin carboxylase (AccC) and two subunits each of ACCase subunit alpha (AccA) and ACCase subunit beta (AccD). Requires Zn(2+) as cofactor.

It is found in the cytoplasm. The catalysed reaction is N(6)-carboxybiotinyl-L-lysyl-[protein] + acetyl-CoA = N(6)-biotinyl-L-lysyl-[protein] + malonyl-CoA. It functions in the pathway lipid metabolism; malonyl-CoA biosynthesis; malonyl-CoA from acetyl-CoA: step 1/1. Its function is as follows. Component of the acetyl coenzyme A carboxylase (ACC) complex. Biotin carboxylase (BC) catalyzes the carboxylation of biotin on its carrier protein (BCCP) and then the CO(2) group is transferred by the transcarboxylase to acetyl-CoA to form malonyl-CoA. This chain is Acetyl-coenzyme A carboxylase carboxyl transferase subunit beta, found in Lactobacillus delbrueckii subsp. bulgaricus (strain ATCC BAA-365 / Lb-18).